Here is a 474-residue protein sequence, read N- to C-terminus: ATP synthase subunit beta, chloroplastic (474 aa).

Residue 155-162 participates in ATP binding; that stretch reads GGAGVGKT.

It belongs to the ATPase alpha/beta chains family. In terms of assembly, F-type ATPases have 2 components, CF(1) - the catalytic core - and CF(0) - the membrane proton channel. CF(1) has five subunits: alpha(3), beta(3), gamma(1), delta(1), epsilon(1). CF(0) has four main subunits: a(1), b(1), b'(1) and c(9-12).

The protein localises to the plastid. It localises to the chloroplast thylakoid membrane. It catalyses the reaction ATP + H2O + 4 H(+)(in) = ADP + phosphate + 5 H(+)(out). In terms of biological role, produces ATP from ADP in the presence of a proton gradient across the membrane. The catalytic sites are hosted primarily by the beta subunits. The protein is ATP synthase subunit beta, chloroplastic of Thalassiosira pseudonana (Marine diatom).